A 297-amino-acid polypeptide reads, in one-letter code: uncharacterized protein (297 aa).

A run of 7 helical transmembrane segments spans residues 14–34 (LFLMFIGTVSFLFIFIPFLKF), 55–75 (LLLGPIYGFFAVMLVTLIYFF), 81–101 (FYFGIYSLIPPTLAVISAGAL), 110–130 (AIILIVGLLLFYLTDVGRVAF), 135–155 (LSTLALLLILIFREKISKLLF), 163–183 (IVGATILSFSSVMTDHLYGSI), and 208–228 (LIMTVIGAFFVIFAIEISKCF).

It localises to the cell membrane. This is an uncharacterized protein from Methanocaldococcus jannaschii (strain ATCC 43067 / DSM 2661 / JAL-1 / JCM 10045 / NBRC 100440) (Methanococcus jannaschii).